The primary structure comprises 125 residues: Small ribosomal subunit protein uS12 (125 aa).

A 3-methylthioaspartic acid modification is found at Asp89.

It belongs to the universal ribosomal protein uS12 family. In terms of assembly, part of the 30S ribosomal subunit. Contacts proteins S8 and S17. May interact with IF1 in the 30S initiation complex.

With S4 and S5 plays an important role in translational accuracy. In terms of biological role, interacts with and stabilizes bases of the 16S rRNA that are involved in tRNA selection in the A site and with the mRNA backbone. Located at the interface of the 30S and 50S subunits, it traverses the body of the 30S subunit contacting proteins on the other side and probably holding the rRNA structure together. The combined cluster of proteins S8, S12 and S17 appears to hold together the shoulder and platform of the 30S subunit. In Cupriavidus pinatubonensis (strain JMP 134 / LMG 1197) (Cupriavidus necator (strain JMP 134)), this protein is Small ribosomal subunit protein uS12.